The primary structure comprises 111 residues: Nucleoid-associated protein Teth39_2199 (111 aa).

This sequence belongs to the YbaB/EbfC family. As to quaternary structure, homodimer.

Its subcellular location is the cytoplasm. It localises to the nucleoid. In terms of biological role, binds to DNA and alters its conformation. May be involved in regulation of gene expression, nucleoid organization and DNA protection. This Thermoanaerobacter pseudethanolicus (strain ATCC 33223 / 39E) (Clostridium thermohydrosulfuricum) protein is Nucleoid-associated protein Teth39_2199.